The chain runs to 205 residues: 3-isopropylmalate dehydratase small subunit (205 aa).

It belongs to the LeuD family. LeuD type 1 subfamily. As to quaternary structure, heterodimer of LeuC and LeuD.

The enzyme catalyses (2R,3S)-3-isopropylmalate = (2S)-2-isopropylmalate. It functions in the pathway amino-acid biosynthesis; L-leucine biosynthesis; L-leucine from 3-methyl-2-oxobutanoate: step 2/4. Its function is as follows. Catalyzes the isomerization between 2-isopropylmalate and 3-isopropylmalate, via the formation of 2-isopropylmaleate. This is 3-isopropylmalate dehydratase small subunit from Christiangramia forsetii (strain DSM 17595 / CGMCC 1.15422 / KT0803) (Gramella forsetii).